The sequence spans 433 residues: Legumain (433 aa).

The signal sequence occupies residues 1–17 (MIWEFTVLLSLVLGTGA). A propeptide spanning residues 18 to 25 (VPLEDPED) is cleaved from the precursor. N-linked (GlcNAc...) asparagine glycosylation is present at Asn91. The active site involves His148. Residue Asn167 is glycosylated (N-linked (GlcNAc...) asparagine). Catalysis depends on Cys189, which acts as the Nucleophile. Residues Asn263 and Asn272 are each glycosylated (N-linked (GlcNAc...) asparagine). A propeptide spanning residues 324–433 (DLQESRRLVQ…SMNKVCHGYY (110 aa)) is cleaved from the precursor. Disulfide bonds link Cys378–Cys412 and Cys390–Cys429.

It belongs to the peptidase C13 family. As to quaternary structure, homodimer before autocatalytic removal of the propeptide. Monomer after autocatalytic processing. May interact with integrins. Activated by autocatalytic processing at pH 4. As to expression, detected in kidney (at protein level).

The protein resides in the lysosome. It carries out the reaction Hydrolysis of proteins and small molecule substrates at -Asn-|-Xaa- bonds.. Has a strict specificity for hydrolysis of asparaginyl bonds. Can also cleave aspartyl bonds slowly, especially under acidic conditions. Involved in the processing of proteins for MHC class II antigen presentation in the lysosomal/endosomal system. Also involved in MHC class I antigen presentation in cross-presenting dendritic cells by mediating cleavage and maturation of Perforin-2 (MPEG1), thereby promoting antigen translocation in the cytosol. Required for normal lysosomal protein degradation in renal proximal tubules. Required for normal degradation of internalized EGFR. Plays a role in the regulation of cell proliferation via its role in EGFR degradation. The chain is Legumain (LGMN) from Bos taurus (Bovine).